The chain runs to 227 residues: LysM and putative peptidoglycan-binding domain-containing protein 1 (227 aa).

Positions Met-1–Gly-11 are enriched in pro residues. Residues Met-1–Arg-20 form a disordered region. 2 positions are modified to phosphoserine: Ser-23 and Ser-33. The 45-residue stretch at Leu-40–Ile-84 folds into the LysM domain. Positions Asn-95–His-150 are disordered. A compositionally biased stretch (acidic residues) spans Asp-98–Glu-107. The residue at position 99 (Ser-99) is a Phosphoserine. Positions Glu-108–Glu-127 are enriched in basic and acidic residues. A phosphoserine mark is found at Ser-166, Ser-181, Ser-194, and Ser-212. The interval Ala-172–Arg-196 is disordered.

The protein is LysM and putative peptidoglycan-binding domain-containing protein 1 (LYSMD1) of Macaca fascicularis (Crab-eating macaque).